Consider the following 184-residue polypeptide: ATP synthase subunit b, chloroplastic (184 aa).

A helical transmembrane segment spans residues 29-49 (TNLINLGVVLGLLVYFGKGVL).

Belongs to the ATPase B chain family. F-type ATPases have 2 components, F(1) - the catalytic core - and F(0) - the membrane proton channel. F(1) has five subunits: alpha(3), beta(3), gamma(1), delta(1), epsilon(1). F(0) has four main subunits: a(1), b(1), b'(1) and c(10-14). The alpha and beta chains form an alternating ring which encloses part of the gamma chain. F(1) is attached to F(0) by a central stalk formed by the gamma and epsilon chains, while a peripheral stalk is formed by the delta, b and b' chains.

The protein localises to the plastid. The protein resides in the chloroplast thylakoid membrane. F(1)F(0) ATP synthase produces ATP from ADP in the presence of a proton or sodium gradient. F-type ATPases consist of two structural domains, F(1) containing the extramembraneous catalytic core and F(0) containing the membrane proton channel, linked together by a central stalk and a peripheral stalk. During catalysis, ATP synthesis in the catalytic domain of F(1) is coupled via a rotary mechanism of the central stalk subunits to proton translocation. Its function is as follows. Component of the F(0) channel, it forms part of the peripheral stalk, linking F(1) to F(0). In Anthoceros angustus (Hornwort), this protein is ATP synthase subunit b, chloroplastic.